Reading from the N-terminus, the 212-residue chain is Ribonuclease HII (212 aa).

The region spanning 18–212 (GCVFGVDEAG…APVAQQELFR (195 aa)) is the RNase H type-2 domain. Residues D24, E25, and D118 each coordinate a divalent metal cation.

The protein belongs to the RNase HII family. Requires Mn(2+) as cofactor. The cofactor is Mg(2+).

It is found in the cytoplasm. The enzyme catalyses Endonucleolytic cleavage to 5'-phosphomonoester.. Its function is as follows. Endonuclease that specifically degrades the RNA of RNA-DNA hybrids. In Erythrobacter litoralis (strain HTCC2594), this protein is Ribonuclease HII.